Here is a 147-residue protein sequence, read N- to C-terminus: SsrA-binding protein (147 aa).

Residues 119–147 are disordered; sequence AKGKKQHDKRESEKQKEWERDKQRLMRPK. Basic and acidic residues predominate over residues 126-147; that stretch reads DKRESEKQKEWERDKQRLMRPK.

Belongs to the SmpB family.

It is found in the cytoplasm. In terms of biological role, required for rescue of stalled ribosomes mediated by trans-translation. Binds to transfer-messenger RNA (tmRNA), required for stable association of tmRNA with ribosomes. tmRNA and SmpB together mimic tRNA shape, replacing the anticodon stem-loop with SmpB. tmRNA is encoded by the ssrA gene; the 2 termini fold to resemble tRNA(Ala) and it encodes a 'tag peptide', a short internal open reading frame. During trans-translation Ala-aminoacylated tmRNA acts like a tRNA, entering the A-site of stalled ribosomes, displacing the stalled mRNA. The ribosome then switches to translate the ORF on the tmRNA; the nascent peptide is terminated with the 'tag peptide' encoded by the tmRNA and targeted for degradation. The ribosome is freed to recommence translation, which seems to be the essential function of trans-translation. In Nitrosospira multiformis (strain ATCC 25196 / NCIMB 11849 / C 71), this protein is SsrA-binding protein.